The primary structure comprises 237 residues: Large ribosomal subunit protein uL1 (237 aa).

This sequence belongs to the universal ribosomal protein uL1 family. In terms of assembly, part of the 50S ribosomal subunit.

Binds directly to 23S rRNA. The L1 stalk is quite mobile in the ribosome, and is involved in E site tRNA release. Functionally, protein L1 is also a translational repressor protein, it controls the translation of the L11 operon by binding to its mRNA. The polypeptide is Large ribosomal subunit protein uL1 (Dehalococcoides mccartyi (strain CBDB1)).